A 511-amino-acid chain; its full sequence is uncharacterized protein (511 aa).

A run of 14 helical transmembrane segments spans residues 7-27 (WVIS…NTAL), 46-66 (VNPI…GPLL), 80-100 (LPVF…ALMA), 107-127 (GAAT…SFPI), 134-154 (LLVL…LGTI), 163-183 (WLFF…YFFL), 200-220 (AGIL…IFLQ), 226-246 (SGYV…LLIV), 266-286 (VLGL…LSAF), 301-321 (LILL…LSAL), 329-349 (GMLG…WLHI), 357-377 (MFAA…AAGL), 394-414 (TAVQ…IGFF), and 437-457 (LFFI…CMNA). The disordered stretch occupies residues 465-486 (AHKPHDKAKTAPEKPAVSAQGL).

It belongs to the major facilitator superfamily.

The protein localises to the cell membrane. This is an uncharacterized protein from Bacillus subtilis (strain 168).